A 251-amino-acid polypeptide reads, in one-letter code: tRNA (guanine-N(1)-)-methyltransferase (251 aa).

Residues Gly-122 and Ile-142–Leu-147 contribute to the S-adenosyl-L-methionine site. The segment at Arg-226 to Gly-251 is disordered. Over residues Pro-237–Gly-251 the composition is skewed to polar residues.

It belongs to the RNA methyltransferase TrmD family. In terms of assembly, homodimer.

The protein resides in the cytoplasm. The enzyme catalyses guanosine(37) in tRNA + S-adenosyl-L-methionine = N(1)-methylguanosine(37) in tRNA + S-adenosyl-L-homocysteine + H(+). In terms of biological role, specifically methylates guanosine-37 in various tRNAs. The protein is tRNA (guanine-N(1)-)-methyltransferase of Rhodopseudomonas palustris (strain BisB18).